Consider the following 304-residue polypeptide: WW domain-binding protein 1 (304 aa).

Positions Met1–Pro26 are disordered. Short sequence motifs (PPxY motif) lie at residues Pro159–Tyr162 and Pro172–Tyr176. 2 disordered regions span residues Thr206–Pro235 and Cys252–Pro304. Residues Glu209–Leu218 are compositionally biased toward polar residues.

As to quaternary structure, binds to the WW domain of YAP1, WWP1 and WWP2. Interacts with WWOX. Interacts with NEDD4.

The sequence is that of WW domain-binding protein 1 (Wbp1) from Mus musculus (Mouse).